Here is a 297-residue protein sequence, read N- to C-terminus: MDSQRGIVEQAKSQSLNRQSSLYSLTLDEVQNHLGSSGKALGSMNLDELLKSVCSVEANQPSSMAVNGGAAAQEGLSRQGSLTLPRDLSKKTVDEVWKDIQQNKNGGSAHERRDKQPTLGEMTLEDLLLKAGVVTETIPGSNHDGPVGGGSAGSGAGLGQNITQVGPWIQYHQLPSMPQPQAFMPYPVSDMQAMVSQSSLMGGLSDTQTPGRKRVASGEVVEKTVERRQKRMIKNRESAARSRARKQAYTHELEIKVSRLEEENERLRKQKEVEKILPSVPPPDPKRQLRRTSSAPF.

Phosphoserine occurs at positions 21, 43, and 81. Disordered stretches follow at residues 100-119 (IQQN…QPTL) and 138-157 (IPGS…SGAG). Threonine 118 bears the Phosphothreonine mark. Positions 146-157 (PVGGGSAGSGAG) are enriched in gly residues. The region spanning 225 to 288 (VERRQKRMIK…SVPPPDPKRQ (64 aa)) is the bZIP domain. Residues 227 to 246 (RRQKRMIKNRESAARSRARK) form a basic motif region. Positions 253 to 267 (LEIKVSRLEEENERL) are leucine-zipper. The tract at residues 272–297 (EVEKILPSVPPPDPKRQLRRTSSAPF) is disordered.

The protein belongs to the bZIP family. ABI5 subfamily. DNA-binding heterodimer with ABI5/DPBF1, DPBF2 or EEL/DPBF4. Interacts with the AFP proteins AFP1, AFP2, AFP3 and AFP4. Predominantly expressed in seeds.

Its subcellular location is the nucleus. Its function is as follows. Binds to the embryo specification element and the ABA-responsive element (ABRE) of the Dc3 gene promoter. Could participate in abscisic acid-regulated gene expression during seed development. The protein is ABSCISIC ACID-INSENSITIVE 5-like protein 2 (DPBF3) of Arabidopsis thaliana (Mouse-ear cress).